Reading from the N-terminus, the 217-residue chain is Outer-membrane lipoprotein LolB (217 aa).

An N-terminal signal peptide occupies residues 1–20; it reads MSRAVRTLALGGLVLVGLSA. Cys-21 carries N-palmitoyl cysteine lipidation. Cys-21 carries S-diacylglycerol cysteine lipidation.

The protein belongs to the LolB family. In terms of assembly, monomer.

Its subcellular location is the cell outer membrane. In terms of biological role, plays a critical role in the incorporation of lipoproteins in the outer membrane after they are released by the LolA protein. The polypeptide is Outer-membrane lipoprotein LolB (Xanthomonas euvesicatoria pv. vesicatoria (strain 85-10) (Xanthomonas campestris pv. vesicatoria)).